We begin with the raw amino-acid sequence, 279 residues long: Malonyl-[acyl-carrier protein] O-methyltransferase (279 aa).

Belongs to the methyltransferase superfamily.

It carries out the reaction malonyl-[ACP] + S-adenosyl-L-methionine = malonyl-[ACP] methyl ester + S-adenosyl-L-homocysteine. The protein operates within cofactor biosynthesis; biotin biosynthesis. In terms of biological role, converts the free carboxyl group of a malonyl-thioester to its methyl ester by transfer of a methyl group from S-adenosyl-L-methionine (SAM). It allows to synthesize pimeloyl-ACP via the fatty acid synthetic pathway. This Hahella chejuensis (strain KCTC 2396) protein is Malonyl-[acyl-carrier protein] O-methyltransferase.